The following is a 103-amino-acid chain: Cystatin-A1 (103 aa).

A Secondary area of contact motif is present at residues 51-55 (QVVAG).

Belongs to the cystatin family.

It is found in the cytoplasm. Its function is as follows. This is an intracellular thiol proteinase inhibitor. The sequence is that of Cystatin-A1 from Sus scrofa (Pig).